Reading from the N-terminus, the 564-residue chain is Myb-like protein F (564 aa).

3 disordered regions span residues 22 to 107 (YNNS…NYNN), 122 to 203 (NYNN…YNGG), and 310 to 410 (NYNN…TKKY). A compositionally biased stretch (low complexity) spans 23–79 (NNSNHYNDNNDNNNNNNNNNNDNNNNDNNNNNNNNNNSIINNESDNESNGTSNNYND). A compositionally biased stretch (basic and acidic residues) spans 82–96 (NDNHHHHQDDEHHGN). 4 stretches are compositionally biased toward low complexity: residues 97–107 (GNDNDNENYNN), 135–173 (EINS…NNSK), 193–203 (NNNNNNKYNGG), and 310–364 (NYNN…NSSN). Basic and acidic residues predominate over residues 365–409 (KEYKEKEYKEKEYKEKEFKESKDSSLKRKSSSDDDGDDSGRDTKK). Positions 412 to 464 (PGRTVWTLEEEELYKEVFNHYGKNWKKIKTHFPDKSKSQVTSHGQYLIKINKL) constitute an SANT domain. The segment covering 519–556 (NNENTNDNNNHNNNNYNDNNNNSNNNNNFNNSNNNNTN) has biased composition (low complexity). The interval 519 to 564 (NNENTNDNNNHNNNNYNDNNNNSNNNNNFNNSNNNNTNKFIDEDDD) is disordered.

The protein localises to the nucleus. In Dictyostelium discoideum (Social amoeba), this protein is Myb-like protein F (mybF).